The following is a 149-amino-acid chain: Transcriptional repressor NrdR (149 aa).

The segment at 3–34 is a zinc-finger region; it reads CPFCSAVDTKVIDSRLVAEGHQVRRRRECLLC. An ATP-cone domain is found at 49 to 139; it reads PRVIKSNGSR…VYRSFEDIRE (91 aa).

Belongs to the NrdR family. It depends on Zn(2+) as a cofactor.

Its function is as follows. Negatively regulates transcription of bacterial ribonucleotide reductase nrd genes and operons by binding to NrdR-boxes. The chain is Transcriptional repressor NrdR from Aeromonas hydrophila subsp. hydrophila (strain ATCC 7966 / DSM 30187 / BCRC 13018 / CCUG 14551 / JCM 1027 / KCTC 2358 / NCIMB 9240 / NCTC 8049).